We begin with the raw amino-acid sequence, 617 residues long: MLLARMNPQVQPENNGADTGPEQPLRARKTAELLVVKERNGVQCLLAPRDGDAQPRETWGKKIDFLLSVVGFAVDLANVWRFPYLCYKNGGGAFLIPYTLFLIIAGMPLFYMELALGQYNREGAATVWKICPFFKGVGYAVILIALYVGFYYNVIIAWSLYYLFSSFTLNLPWTDCGHTWNSPNCTDPKLLNGSVLGNHTKYSKYKFTPAAEFYERGVLHLHESSGIHDIGLPQWQLLLCLMVVVIVLYFSLWKGVKTSGKVVWITATLPYFVLFVLLVHGVTLPGASNGINAYLHIDFYRLKEATVWIDAATQIFFSLGAGFGVLIAFASYNKFDNNCYRDALLTSSINCITSFVSGFAIFSILGYMAHEHKVNIEDVATEGAGLVFILYPEAISTLSGSTFWAVVFFVMLLALGLDSSMGGMEAVITGLADDFQVLKRHRKLFTFGVTFSTFLLALFCITKGGIYVLTLLDTFAAGTSILFAVLMEAIGVSWFYGVDRFSNDIQQMMGFRPGLYWRLCWKFVSPAFLLFVVVVSIINFKPLTYDDYIFPPWANWVGWGIALSSMVLVPIYVIYKFLSTQGSLWERLAYGITPENEHHLVAQRDIRQFQLQHWLAI.

The segment at Met-1 to Gln-23 is disordered. The Cytoplasmic portion of the chain corresponds to Met-1–Lys-62. A compositionally biased stretch (polar residues) spans Pro-8–Ala-17. The helical transmembrane segment at Ile-63–Lys-88 threads the bilayer. Na(+) contacts are provided by Gly-71, Ala-73, and Val-74. Residue Asp-75 coordinates (R)-noradrenaline. Asp-75 is a binding site for dopamine. A Na(+)-binding site is contributed by Asn-78. (R)-noradrenaline is bound by residues Tyr-87 and Lys-88. The Extracellular segment spans residues Asn-89–Gly-92. The helical transmembrane segment at Ala-93 to Leu-116 threads the bilayer. The Cytoplasmic portion of the chain corresponds to Gly-117–Lys-135. Residues Gly-136–Ser-166 traverse the membrane as a helical segment. Ala-145 and Gly-149 together coordinate (R)-noradrenaline. Position 145 (Ala-145) interacts with dopamine. Topologically, residues Phe-167–Pro-233 are extracellular. A disulfide bridge links Cys-176 with Cys-185. N-linked (GlcNAc...) asparagine glycosylation is found at Asn-184, Asn-192, and Asn-198. A helical transmembrane segment spans residues Gln-234–Lys-254. Residues Gly-255–Lys-257 are Cytoplasmic-facing. A helical membrane pass occupies residues Thr-258 to Val-282. Topologically, residues Thr-283–Thr-306 are extracellular. The chain crosses the membrane as a helical span at residues Val-307 to Tyr-332. A (R)-noradrenaline-binding site is contributed by Phe-317. Dopamine is bound at residue Phe-317. Ser-318 lines the Na(+) pocket. Over Asn-333 to Asn-338 the chain is Cytoplasmic. The chain crosses the membrane as a helical span at residues Cys-339–Phe-362. Na(+) is bound at residue Asn-350. The Extracellular portion of the chain corresponds to Ser-363–Thr-402. (R)-noradrenaline is bound at residue Glu-382. Glu-382 is a dopamine binding site. Residues Phe-403–Ile-428 traverse the membrane as a helical segment. Positions 418 and 419 each coordinate Na(+). Residues Thr-429–Lys-443 are Cytoplasmic-facing. A helical transmembrane segment spans residues Leu-444–Gly-464. A topological domain (extracellular) is located at residue Gly-465. Residues Ile-466–Val-492 form a helical membrane-spanning segment. Residues Ser-493 to Lys-522 lie on the Cytoplasmic side of the membrane. A helical transmembrane segment spans residues Phe-523–Tyr-545. Topologically, residues Asp-546–Tyr-548 are extracellular. Residues Ile-549–Val-569 form a helical membrane-spanning segment. The Cytoplasmic portion of the chain corresponds to Pro-570–Ile-617.

The protein belongs to the sodium:neurotransmitter symporter (SNF) (TC 2.A.22) family. SLC6A2 subfamily. In terms of assembly, monomer. Can form homodimers in the cell membrane; homodimerization is mostly mediated by cholesterol and lipids, and regulates neurotransmitter transport activity. Interacts with PRKCABP. Post-translationally, palmitoylated; palmitoylation regulates protein levels and neurotransmitter transport.

It localises to the cell membrane. The protein localises to the cell projection. The protein resides in the axon. It is found in the synapse. Its subcellular location is the synaptosome. It catalyses the reaction (R)-noradrenaline(out) + chloride(out) + Na(+)(out) = (R)-noradrenaline(in) + chloride(in) + Na(+)(in). The enzyme catalyses dopamine(out) + chloride(out) + Na(+)(out) = dopamine(in) + chloride(in) + Na(+)(in). The catalysed reaction is dopamine(out) + chloride(out) + 2 Na(+)(out) = dopamine(in) + chloride(in) + 2 Na(+)(in). With respect to regulation, inhibited by mazindol, desipramine, nomifensine and nortriptyline. Mediates sodium- and chloride-dependent transport of norepinephrine (also known as noradrenaline), the primary signaling neurotransmitter in the autonomic sympathetic nervous system. Is responsible for norepinephrine re-uptake and clearance from the synaptic cleft, thus playing a crucial role in norepinephrine inactivation and homeostasis. Can also mediate sodium- and chloride-dependent transport of dopamine. This chain is Sodium-dependent noradrenaline transporter, found in Homo sapiens (Human).